The sequence spans 62 residues: Potassium channel toxin alpha-KTx Tx308 (62 aa).

The N-terminal stretch at M1 to A18 is a signal peptide. 3 cysteine pairs are disulfide-bonded: C28/C46, C33/C59, and C37/C61.

It belongs to the short scorpion toxin superfamily. Potassium channel inhibitor family. Alpha-KTx 23 subfamily. As to expression, expressed by the venom gland.

The protein localises to the secreted. In terms of biological role, may block potassium channels. This Buthus israelis (Israeli scorpion) protein is Potassium channel toxin alpha-KTx Tx308.